Reading from the N-terminus, the 817-residue chain is MNRRNRSNDLNPEPSIENPNNQIAEEFPGNNSVYKSDGYVDLKNNGRLFPIWILKNFKQYKLPEIIRKENEDPCNVQVKLELRKYQEFVGQYLNPQGPYTSILLYHGLGSGKTASAINLMNILYNYDNGTNFIVLIKASLHNDPWMQDLKEWLGRDPSEQNVDNVTKLDRYKNIHFVHYDSPFADSSFMSVIKTLDLSKPTMYIIDEAHNFIRNVYSNINSKLGKRAKVIYEYIMKDKRENKNTRIVLISATPAINTPFELALMFNLLRPGIFPSSELDFNRTFVTESSYPILNPMKKNMFERRILGLVSYYIGATPDLYARQELKYINLPMSAYQYDIYRIFEKLEAEIQERARRRGKQSQLYRTYTRQACNFVFPYVNMNVNGELRPRPGKFRLSEKLADDFSKGKNLDVPDTEKEILNKYTKAIENYLNETERYFQNINKKDAENGRTIINDLDEFKKGFGTKFNSFLQYYQSEGPRSSLLTEMYNCSPKMLAIAFMTYISPGKVMIYSNYVVMEGIDVMKIYFRLIGFNDFTIAREYMGYCEYHGRIDPKDRVRIKNMFNDKNNVYGNKCKVIMLSPSATEGIQLLDIRQEHIMEPYWTEVRIQQVIGRGVRQCSHRDLPMSERIVDIYRYKVIKPENLDPDDTVRQSTDEYVEDQAKSKANLIESFLGAMKEAAVDCELFKEHNMMSQSYYCFKFPESAVTKTNVGPAYREDIKDDVKYDSGLNSKNSIVERIRVVKVNAVYQINTDNNNPVYSSPTKYWYNKKTGMVYDFETHYPVGQVEFIDNLPNKLDKDTYIMRIDVIIPSITGSVNT.

The segment at 1-29 (MNRRNRSNDLNPEPSIENPNNQIAEEFPG) is disordered. Residues 17 to 29 (ENPNNQIAEEFPG) show a composition bias toward polar residues. A Helicase ATP-binding domain is found at 93–271 (LNPQGPYTSI…ALMFNLLRPG (179 aa)). 106-113 (HGLGSGKT) lines the ATP pocket. Residues 206 to 209 (DEAH) carry the DEAH box motif. In terms of domain architecture, Helicase C-terminal spans 495 to 661 (LAIAFMTYIS…STDEYVEDQA (167 aa)).

It belongs to the DEAD box helicase family. DEAH subfamily.

It is found in the virion. It carries out the reaction ATP + H2O = ADP + phosphate + H(+). The protein is Putative ATP-dependent RNA helicase R350 of Acanthamoeba polyphaga mimivirus (APMV).